Reading from the N-terminus, the 1663-residue chain is Cortactin-binding protein 2 (1663 aa).

Disordered stretches follow at residues 1-23 (MATDGASCEPDLSRAPEDAAGAA), 203-222 (KKKTNELEEELSTEKRRSTE), 359-440 (QASH…LHPG), 454-478 (GNANDPDQNGNTTQSPPSRDVSPTS), and 498-617 (RFTS…KPSI). Positions 119-276 (KKMQERMSAQ…EQLKRGSDSK (158 aa)) form a coiled coil. The segment covering 386-396 (PSTGSTPDPTS) has biased composition (low complexity). Arg-498 bears the Asymmetric dimethylarginine mark. Residues 583–593 (TVASPPSSLPQ) are compositionally biased toward polar residues. ANK repeat units lie at residues 709 to 739 (GRPTLLQQAAAQGNVTLLSMLLNEEGLDINY), 743 to 772 (DGHSALYSAAKNGHTDCVRLLLSAEAQVNA), 776 to 805 (NGFTPLCAAAAQGHFECVELLIAYDANINH), 809 to 838 (GGQTPLYLACKNGNKECVKLLLEAGTNRSV), 842 to 871 (DGWTPVHAAVDTGNVDSLKLLMYHRIPARG), and 912 to 942 (EGWTAAHIAASKGFKNCLEILCRHRGLEPER). The segment at 1446 to 1485 (NKKKGESGAWRKVNTSPRRKSGRFSLPTWNKPDLSTEGMK) is disordered. Phosphoserine is present on Ser-1524. A disordered region spans residues 1580–1663 (SQKEVSPLSS…KNEHLEKPNK (84 aa)). Positions 1582–1599 (KEVSPLSSHQTTECSNSK) are enriched in polar residues. Low complexity predominate over residues 1624–1638 (SQNTKRSSSSSNTRQ). The segment covering 1645 to 1663 (SKEENWNLHKNEHLEKPNK) has biased composition (basic and acidic residues).

In terms of assembly, interacts with CTTN/cortactin SH3 domain. Interacts with STRN, STRN4/zinedin and MOB4/phocein; this interactions mediate the association with the STRIPAK core complex and may regulate dendritic spine distribution of the STRIPAK complex in hippocampal neurons. Activation of glutamate receptors weakens the interaction with STRN and STRN4.

The protein localises to the cytoplasm. Its subcellular location is the cell cortex. It is found in the cell projection. It localises to the dendritic spine. Regulates the dendritic spine distribution of CTTN/cortactin in hippocampal neurons, and thus controls dendritic spinogenesis and dendritic spine maintenance. Associates with the striatin-interacting phosphatase and kinase (STRIPAK) core complex to regulate dendritic spine distribution of the STRIPAK complex in hippocampal neurons. The protein is Cortactin-binding protein 2 (CTTNBP2) of Pongo abelii (Sumatran orangutan).